Here is a 581-residue protein sequence, read N- to C-terminus: A-type ATP synthase subunit A (581 aa).

An ATP-binding site is contributed by 234 to 241 (GPFGSGKT).

It belongs to the ATPase alpha/beta chains family. As to quaternary structure, has multiple subunits with at least A(3), B(3), C, D, E, F, H, I and proteolipid K(x).

The protein localises to the cell membrane. It catalyses the reaction ATP + H2O + 4 H(+)(in) = ADP + phosphate + 5 H(+)(out). Its function is as follows. Component of the A-type ATP synthase that produces ATP from ADP in the presence of a proton gradient across the membrane. The A chain is the catalytic subunit. The polypeptide is A-type ATP synthase subunit A (Archaeoglobus fulgidus (strain ATCC 49558 / DSM 4304 / JCM 9628 / NBRC 100126 / VC-16)).